The chain runs to 73 residues: Methionyl-tRNA formyltransferase (73 aa).

Belongs to the Fmt family.

The enzyme catalyses L-methionyl-tRNA(fMet) + (6R)-10-formyltetrahydrofolate = N-formyl-L-methionyl-tRNA(fMet) + (6S)-5,6,7,8-tetrahydrofolate + H(+). In terms of biological role, attaches a formyl group to the free amino group of methionyl-tRNA(fMet). The formyl group appears to play a dual role in the initiator identity of N-formylmethionyl-tRNA by promoting its recognition by IF2 and preventing the misappropriation of this tRNA by the elongation apparatus. This chain is Methionyl-tRNA formyltransferase (fmt), found in Rickettsia rickettsii.